Reading from the N-terminus, the 146-residue chain is Flagellar assembly factor FliW (146 aa).

The protein belongs to the FliW family. As to quaternary structure, interacts with translational regulator CsrA and flagellin(s).

Its subcellular location is the cytoplasm. Its function is as follows. Acts as an anti-CsrA protein, binds CsrA and prevents it from repressing translation of its target genes, one of which is flagellin. Binds to flagellin and participates in the assembly of the flagellum. The sequence is that of Flagellar assembly factor FliW from Azoarcus sp. (strain BH72).